The sequence spans 300 residues: ATP-dependent (S)-NAD(P)H-hydrate dehydratase (300 aa).

The region spanning 6–297 (YAGKIKEFIP…GCIHQSFTSL (292 aa)) is the YjeF C-terminal domain. (6S)-NADPHX-binding positions include glycine 106 and 158-164 (NEVEFKR). ATP contacts are provided by residues 188–192 (KGSTD) and 218–227 (GSNRRCGGQG). Residue aspartate 228 coordinates (6S)-NADPHX.

This sequence belongs to the NnrD/CARKD family. Mg(2+) is required as a cofactor.

The enzyme catalyses (6S)-NADHX + ATP = ADP + phosphate + NADH + H(+). It catalyses the reaction (6S)-NADPHX + ATP = ADP + phosphate + NADPH + H(+). Its function is as follows. Catalyzes the dehydration of the S-form of NAD(P)HX at the expense of ATP, which is converted to ADP. Together with NAD(P)HX epimerase, which catalyzes the epimerization of the S- and R-forms, the enzyme allows the repair of both epimers of NAD(P)HX, a damaged form of NAD(P)H that is a result of enzymatic or heat-dependent hydration. This chain is ATP-dependent (S)-NAD(P)H-hydrate dehydratase, found in Pediculus humanus subsp. corporis (Body louse).